Here is a 198-residue protein sequence, read N- to C-terminus: NAD(P)H dehydrogenase (quinone) (198 aa).

The region spanning isoleucine 4 to valine 189 is the Flavodoxin-like domain. Residues serine 10–isoleucine 15 and threonine 78–phenylalanine 80 each bind FMN. Tyrosine 12 is a binding site for NAD(+). Substrate is bound at residue tryptophan 98. Residues serine 113–glycine 118 and histidine 133 each bind FMN.

Belongs to the WrbA family. It depends on FMN as a cofactor.

The enzyme catalyses a quinone + NADH + H(+) = a quinol + NAD(+). It catalyses the reaction a quinone + NADPH + H(+) = a quinol + NADP(+). The polypeptide is NAD(P)H dehydrogenase (quinone) (Salmonella paratyphi B (strain ATCC BAA-1250 / SPB7)).